Here is a 93-residue protein sequence, read N- to C-terminus: DNA-binding protein HB1 (93 aa).

The protein belongs to the bacterial histone-like protein family. Homodimer.

Its function is as follows. Histone-like DNA-binding protein which is capable of wrapping DNA to stabilize it, and thus to prevent its denaturation under extreme environmental conditions. This chain is DNA-binding protein HB1 (hup), found in Bifidobacterium longum (strain NCC 2705).